The primary structure comprises 151 residues: Ribosome maturation factor RimP (151 aa).

This sequence belongs to the RimP family.

The protein resides in the cytoplasm. In terms of biological role, required for maturation of 30S ribosomal subunits. This Shewanella piezotolerans (strain WP3 / JCM 13877) protein is Ribosome maturation factor RimP.